Consider the following 75-residue polypeptide: Small ribosomal subunit protein bS18 (75 aa).

Belongs to the bacterial ribosomal protein bS18 family. As to quaternary structure, part of the 30S ribosomal subunit. Forms a tight heterodimer with protein bS6.

Functionally, binds as a heterodimer with protein bS6 to the central domain of the 16S rRNA, where it helps stabilize the platform of the 30S subunit. The protein is Small ribosomal subunit protein bS18 of Psychrobacter sp. (strain PRwf-1).